Here is a 631-residue protein sequence, read N- to C-terminus: Origin recognition complex subunit 1 (631 aa).

Low complexity-rich tracts occupy residues 1–14 (MTDESSSSISYPPI) and 22–37 (KLNNNTNNNNKNNNNH). The interval 1–164 (MTDESSSSIS…EEEDEEGKFN (164 aa)) is disordered. A compositionally biased stretch (basic and acidic residues) spans 55–80 (DNEKIGFSDPENEKINKHKASFKDSN). The span at 91–104 (EDTDDDDYEDEDED) shows a compositional bias: acidic residues. Positions 105–133 (ENHKIKDESDNSEDFNNHTKNTTDLDEGF) are enriched in basic and acidic residues. Positions 141–160 (ESEEEEEEEEYEEEEEEDEE) are enriched in acidic residues. ATP-binding positions include Val-230 and 265–273 (GMPGTGKTA). Asp-361 and Glu-362 together coordinate Mg(2+). Glu-362, Asn-395, and Arg-460 together coordinate ATP.

This sequence belongs to the ORC1 family. As to quaternary structure, ORC is composed of six subunits.

It localises to the nucleus. Component of the origin recognition complex (ORC) that binds origins of replication. DNA-binding is ATP-dependent, however specific DNA sequences that define origins of replication have not been identified so far. ORC is required to assemble the pre-replication complex necessary to initiate DNA replication. The sequence is that of Origin recognition complex subunit 1 (orcA) from Dictyostelium discoideum (Social amoeba).